We begin with the raw amino-acid sequence, 188 residues long: Threonylcarbamoyl-AMP synthase (188 aa).

The 186-residue stretch at 3–188 (QLHPSEIKDL…RSGKILRNGQ (186 aa)) folds into the YrdC-like domain.

Belongs to the SUA5 family. TsaC subfamily.

Its subcellular location is the cytoplasm. It catalyses the reaction L-threonine + hydrogencarbonate + ATP = L-threonylcarbamoyladenylate + diphosphate + H2O. Its function is as follows. Required for the formation of a threonylcarbamoyl group on adenosine at position 37 (t(6)A37) in tRNAs that read codons beginning with adenine. Catalyzes the conversion of L-threonine, HCO(3)(-)/CO(2) and ATP to give threonylcarbamoyl-AMP (TC-AMP) as the acyladenylate intermediate, with the release of diphosphate. This is Threonylcarbamoyl-AMP synthase from Shewanella sp. (strain ANA-3).